The primary structure comprises 293 residues: Fructose-bisphosphate aldolase (293 aa).

S50 contacts D-glyceraldehyde 3-phosphate. D85 functions as the Proton donor in the catalytic mechanism. Residues H86, D106, E136, and H178 each contribute to the Zn(2+) site. Position 179 (G179) interacts with dihydroxyacetone phosphate. H208 lines the Zn(2+) pocket. Dihydroxyacetone phosphate-binding positions include 209–211 (GGS) and 230–233 (NVNT).

It belongs to the class II fructose-bisphosphate aldolase family. Zn(2+) serves as cofactor.

It carries out the reaction beta-D-fructose 1,6-bisphosphate = D-glyceraldehyde 3-phosphate + dihydroxyacetone phosphate. It functions in the pathway carbohydrate degradation; glycolysis; D-glyceraldehyde 3-phosphate and glycerone phosphate from D-glucose: step 4/4. Catalyzes the aldol condensation of dihydroxyacetone phosphate (DHAP or glycerone-phosphate) with glyceraldehyde 3-phosphate (G3P) to form fructose 1,6-bisphosphate (FBP) in gluconeogenesis and the reverse reaction in glycolysis. This chain is Fructose-bisphosphate aldolase (fba), found in Streptococcus pyogenes serotype M1.